The primary structure comprises 251 residues: Methionine aminopeptidase (251 aa).

His76 serves as a coordination point for substrate. A divalent metal cation is bound by residues Asp93, Asp104, and His168. His175 contacts substrate. 2 residues coordinate a divalent metal cation: Glu202 and Glu233.

This sequence belongs to the peptidase M24A family. Methionine aminopeptidase type 1 subfamily. As to quaternary structure, monomer. Requires Co(2+) as cofactor. Zn(2+) is required as a cofactor. It depends on Mn(2+) as a cofactor. Fe(2+) serves as cofactor.

It catalyses the reaction Release of N-terminal amino acids, preferentially methionine, from peptides and arylamides.. In terms of biological role, removes the N-terminal methionine from nascent proteins. The N-terminal methionine is often cleaved when the second residue in the primary sequence is small and uncharged (Met-Ala-, Cys, Gly, Pro, Ser, Thr, or Val). Requires deformylation of the N(alpha)-formylated initiator methionine before it can be hydrolyzed. This chain is Methionine aminopeptidase, found in Staphylococcus epidermidis (strain ATCC 12228 / FDA PCI 1200).